We begin with the raw amino-acid sequence, 149 residues long: D-aminoacyl-tRNA deacylase (149 aa).

The short motif at 137-138 (GP) is the Gly-cisPro motif, important for rejection of L-amino acids element.

The protein belongs to the DTD family. In terms of assembly, homodimer.

It localises to the cytoplasm. The enzyme catalyses glycyl-tRNA(Ala) + H2O = tRNA(Ala) + glycine + H(+). It carries out the reaction a D-aminoacyl-tRNA + H2O = a tRNA + a D-alpha-amino acid + H(+). An aminoacyl-tRNA editing enzyme that deacylates mischarged D-aminoacyl-tRNAs. Also deacylates mischarged glycyl-tRNA(Ala), protecting cells against glycine mischarging by AlaRS. Acts via tRNA-based rather than protein-based catalysis; rejects L-amino acids rather than detecting D-amino acids in the active site. By recycling D-aminoacyl-tRNA to D-amino acids and free tRNA molecules, this enzyme counteracts the toxicity associated with the formation of D-aminoacyl-tRNA entities in vivo and helps enforce protein L-homochirality. The chain is D-aminoacyl-tRNA deacylase from Clostridium perfringens (strain ATCC 13124 / DSM 756 / JCM 1290 / NCIMB 6125 / NCTC 8237 / Type A).